The chain runs to 152 residues: Protein-export protein SecB (152 aa).

This sequence belongs to the SecB family. In terms of assembly, homotetramer, a dimer of dimers. One homotetramer interacts with 1 SecA dimer.

The protein resides in the cytoplasm. One of the proteins required for the normal export of preproteins out of the cell cytoplasm. It is a molecular chaperone that binds to a subset of precursor proteins, maintaining them in a translocation-competent state. It also specifically binds to its receptor SecA. This is Protein-export protein SecB from Rickettsia felis (strain ATCC VR-1525 / URRWXCal2) (Rickettsia azadi).